A 463-amino-acid polypeptide reads, in one-letter code: UDP-N-acetylmuramate--L-alanine ligase (463 aa).

112-118 lines the ATP pocket; it reads GTHGKTT.

Belongs to the MurCDEF family.

The protein resides in the cytoplasm. The enzyme catalyses UDP-N-acetyl-alpha-D-muramate + L-alanine + ATP = UDP-N-acetyl-alpha-D-muramoyl-L-alanine + ADP + phosphate + H(+). Its pathway is cell wall biogenesis; peptidoglycan biosynthesis. In terms of biological role, cell wall formation. This Thiobacillus denitrificans (strain ATCC 25259 / T1) protein is UDP-N-acetylmuramate--L-alanine ligase.